A 320-amino-acid chain; its full sequence is Mitochondrial thiamine pyrophosphate carrier (320 aa).

Solcar repeat units follow at residues 13-106 (NTKF…LTEL), 116-202 (REFS…LKHL), and 214-309 (NENL…FCNV). Residues 19 to 39 (AVAGSVSGLVTRALISPFDVI) form a helical membrane-spanning segment. Serine 51 is subject to Phosphoserine. The next 4 helical transmembrane spans lie at 87 to 107 (ILSI…TELV), 122 to 142 (FVCG…VDVL), 173 to 193 (VFYK…GLQF), and 220 to 240 (LLCG…LDLF). The Substrate recognition motif lies at 241-246 (KKRLQV). Residues 293–313 (ALSTGFMFFSYEFFCNVFHCM) form a helical membrane-spanning segment.

Belongs to the mitochondrial carrier (TC 2.A.29) family. In terms of tissue distribution, expressed in all tissues examined except for placenta. Highest levels in colon, kidney, lung, testis, spleen, and brain.

It localises to the mitochondrion membrane. The catalysed reaction is thiamine phosphate(out) + thiamine diphosphate(in) = thiamine phosphate(in) + thiamine diphosphate(out). Functionally, mitochondrial transporter mediating uptake of thiamine diphosphate into mitochondria. It is not clear if the antiporter activity is affected by the membrane potential or by the proton electrochemical gradient. The protein is Mitochondrial thiamine pyrophosphate carrier of Homo sapiens (Human).